Reading from the N-terminus, the 183-residue chain is Photosystem I assembly protein Ycf4 (183 aa).

2 helical membrane passes run 21–43 and 58–80; these read YWWA…SSRL and FIPQ…TYLW.

The protein belongs to the Ycf4 family.

The protein resides in the plastid. It is found in the chloroplast thylakoid membrane. In terms of biological role, seems to be required for the assembly of the photosystem I complex. The chain is Photosystem I assembly protein Ycf4 from Nephroselmis olivacea (Green alga).